The primary structure comprises 490 residues: Betaine aldehyde dehydrogenase (490 aa).

Serine 26, isoleucine 27, and aspartate 93 together coordinate K(+). Glycine 150 to tryptophan 152 contributes to the NAD(+) binding site. Lysine 162 serves as the catalytic Charge relay system. NAD(+) contacts are provided by residues lysine 176–glutamate 179 and glycine 230–threonine 233. Leucine 246 is a binding site for K(+). Glutamate 252 serves as the catalytic Proton acceptor. NAD(+)-binding residues include glycine 254, cysteine 286, and glutamate 387. Residue cysteine 286 is the Nucleophile of the active site. The residue at position 286 (cysteine 286) is a Cysteine sulfenic acid (-SOH). Positions 457 and 460 each coordinate K(+). Catalysis depends on glutamate 464, which acts as the Charge relay system.

Belongs to the aldehyde dehydrogenase family. As to quaternary structure, dimer of dimers. K(+) is required as a cofactor.

It catalyses the reaction betaine aldehyde + NAD(+) + H2O = glycine betaine + NADH + 2 H(+). It functions in the pathway amine and polyamine biosynthesis; betaine biosynthesis via choline pathway; betaine from betaine aldehyde: step 1/1. Its function is as follows. Involved in the biosynthesis of the osmoprotectant glycine betaine. Catalyzes the irreversible oxidation of betaine aldehyde to the corresponding acid. This is Betaine aldehyde dehydrogenase from Acinetobacter baumannii (strain SDF).